A 118-amino-acid polypeptide reads, in one-letter code: UPF0102 protein NE0719 (118 aa).

This sequence belongs to the UPF0102 family.

This is UPF0102 protein NE0719 from Nitrosomonas europaea (strain ATCC 19718 / CIP 103999 / KCTC 2705 / NBRC 14298).